The chain runs to 391 residues: DNA-directed RNA polymerase I subunit RPA43 (391 aa).

2 disordered regions span residues Met-1 to Ser-27 and Gln-220 to Lys-391. A compositionally biased stretch (basic residues) spans Gly-288 to Arg-299. A coiled-coil region spans residues Arg-289–Ile-353. Residues Met-312–Asp-323 show a composition bias toward polar residues. Residues Lys-336–Asp-345 show a composition bias toward basic residues.

Belongs to the eukaryotic RPA43 RNA polymerase subunit family. In terms of assembly, component of the RNA polymerase I (Pol I) complex consisting of at least 13 subunits.

It is found in the nucleus. The protein localises to the nucleolus. In terms of biological role, DNA-dependent RNA polymerase catalyzes the transcription of DNA into RNA using the four ribonucleoside triphosphates as substrates. Component of RNA polymerase I which synthesizes ribosomal RNA precursors. May be involved in recruitment of Pol I to rDNA promoters. This Danio rerio (Zebrafish) protein is DNA-directed RNA polymerase I subunit RPA43.